We begin with the raw amino-acid sequence, 258 residues long: 5'-nucleotidase SurE (258 aa).

Positions 9, 10, 42, and 96 each coordinate a divalent metal cation.

Belongs to the SurE nucleotidase family. A divalent metal cation is required as a cofactor.

The protein resides in the cytoplasm. The catalysed reaction is a ribonucleoside 5'-phosphate + H2O = a ribonucleoside + phosphate. Functionally, nucleotidase that shows phosphatase activity on nucleoside 5'-monophosphates. The sequence is that of 5'-nucleotidase SurE from Campylobacter jejuni subsp. jejuni serotype O:2 (strain ATCC 700819 / NCTC 11168).